The chain runs to 499 residues: MAAASVSETSASQFSNILAEPSKSNGSMVRHSSSPYVVYPPDKPFLNSDLRRSPNKPTFAYPESNSRAIFSALKNLQDKIRRLELERIQAEESVKTLSKETIEYKKVLDEQIPERENSKNEESKHNQELTSQLLAAENKCNLLEKQLEYMRNMIKHAEMERTSVLEKQVSLERERQHDQTHVQNQLEKLDLLEQEYNKLTTMQALAEKKMQELEAKLRQEEQERKRMQAKAAQLQTGLEVNRLIYEDKATSCVPNTKRIKKKKSKPPEKKGSRNYFAVQPHYRLCLGDMPFVAGKSTSPSHAVVANVQHVLHLMKQHSKVLCNDRVVSSIPLAKQVSSRTGKSKKSATPPSSSSVNEELSEVLQTLQDEFGQMSFDHQQLAKLIQESPTVELKDNLECELEALVGRMEAKANQITKVRKYQAQLEKQKLEKQKKELKATRKTLDEEGNSSSRSTTTGTTNKKDFAKPRPGEKSRKNLQLLKDMQSIQNSLQSNSLCWDY.

The segment covering 1–35 has biased composition (polar residues); sequence MAAASVSETSASQFSNILAEPSKSNGSMVRHSSSP. Residues 1–58 form a disordered region; that stretch reads MAAASVSETSASQFSNILAEPSKSNGSMVRHSSSPYVVYPPDKPFLNSDLRRSPNKPT. Ser53 is subject to Phosphoserine. Residues 58–239 are centrosome localization domain (CLD); sequence TFAYPESNSR…KAAQLQTGLE (182 aa). The stretch at 63–241 forms a coiled coil; it reads ESNSRAIFSA…AQLQTGLEVN (179 aa). The mediates interaction with microtubules stretch occupies residues 277-490; the sequence is AVQPHYRLCL…KDMQSIQNSL (214 aa). 2 disordered regions span residues 334–357 and 431–476; these read KQVS…SVNE and KQKK…SRKN. Residues 346–357 are compositionally biased toward low complexity; sequence SATPPSSSSVNE. Positions 389 to 450 form a coiled coil; that stretch reads TVELKDNLEC…KTLDEEGNSS (62 aa). Residues 431 to 444 are compositionally biased toward basic and acidic residues; sequence KQKKELKATRKTLD. Low complexity predominate over residues 449–459; that stretch reads SSSRSTTTGTT. Over residues 460–474 the composition is skewed to basic and acidic residues; that stretch reads NKKDFAKPRPGEKSR.

The protein belongs to the translokin family. As to quaternary structure, homodimer and homooligomer. Interacts with FGF2 and RAP80. Does not interact with FGF1 or FGF2 isoform 24 kDa. Interacts with microtubules.

It localises to the nucleus. The protein resides in the cytoplasm. It is found in the cytoskeleton. The protein localises to the microtubule organizing center. Its subcellular location is the centrosome. Its function is as follows. Centrosomal protein which may be required for microtubule attachment to centrosomes. May act by forming ring-like structures around microtubules. Mediates nuclear translocation and mitogenic activity of the internalized growth factor FGF2. The sequence is that of Centrosomal protein of 57 kDa (CEP57) from Bos taurus (Bovine).